A 353-amino-acid chain; its full sequence is Ion-translocating oxidoreductase complex subunit D (353 aa).

The next 3 helical transmembrane spans lie at Leu-20 to Phe-39, Pro-68 to Cys-88, and Val-129 to Val-149. An FMN phosphoryl threonine modification is found at Thr-187. The next 4 membrane-spanning stretches (helical) occupy residues Leu-215–Ser-235, Ala-238–Gly-258, Ala-267–Thr-287, and Ile-300–Pro-320.

The protein belongs to the NqrB/RnfD family. In terms of assembly, the complex is composed of six subunits: RnfA, RnfB, RnfC, RnfD, RnfE and RnfG. FMN is required as a cofactor.

Its subcellular location is the cell inner membrane. Functionally, part of a membrane-bound complex that couples electron transfer with translocation of ions across the membrane. This Colwellia psychrerythraea (strain 34H / ATCC BAA-681) (Vibrio psychroerythus) protein is Ion-translocating oxidoreductase complex subunit D.